A 449-amino-acid chain; its full sequence is Glucose-6-phosphate isomerase (449 aa).

Glu291 acts as the Proton donor in catalysis. Active-site residues include His312 and Lys426.

The protein belongs to the GPI family.

The protein localises to the cytoplasm. The enzyme catalyses alpha-D-glucose 6-phosphate = beta-D-fructose 6-phosphate. Its pathway is carbohydrate biosynthesis; gluconeogenesis. It functions in the pathway carbohydrate degradation; glycolysis; D-glyceraldehyde 3-phosphate and glycerone phosphate from D-glucose: step 2/4. Catalyzes the reversible isomerization of glucose-6-phosphate to fructose-6-phosphate. The protein is Glucose-6-phosphate isomerase of Streptococcus gordonii (strain Challis / ATCC 35105 / BCRC 15272 / CH1 / DL1 / V288).